A 176-amino-acid polypeptide reads, in one-letter code: Large ribosomal subunit protein eL20 (176 aa).

Residue K11 forms a Glycyl lysine isopeptide (Lys-Gly) (interchain with G-Cter in SUMO2) linkage. Y63 is modified (phosphotyrosine). S71 carries the phosphoserine modification. N6-succinyllysine is present on K76. At S123 the chain carries Phosphoserine. Residues K128 and K170 each participate in a glycyl lysine isopeptide (Lys-Gly) (interchain with G-Cter in SUMO2) cross-link.

The protein belongs to the eukaryotic ribosomal protein eL20 family. In terms of assembly, component of the large ribosomal subunit. Binds IPO9 with high affinity.

It is found in the cytoplasm. Its function is as follows. Component of the large ribosomal subunit. The ribosome is a large ribonucleoprotein complex responsible for the synthesis of proteins in the cell. This is Large ribosomal subunit protein eL20 (RPL18A) from Oryctolagus cuniculus (Rabbit).